A 410-amino-acid chain; its full sequence is MSLMVVSMACVGFFLLEGPWPHVGGQDKPFLSAWPGTVVSEGQHVTLQCRSRLGFNEFSLSKEDGMPVPELYNRIFRNSFLMGPVTPAHAGTYRCCSSHPHSPTGWSAPSNPVVIMVTGVHRKPSLLAHPGPLVKSGETVILQCWSDVRFERFLLHREGITEDPLRLVGQLHDAGSQVNYSMGPMTPALAGTYRCFGSVTHLPYELSAPSDPLDIVVVGLYGKPSLSAQPGPTVQAGENVTLSCSSRSLFDIYHLSREAEAGELRLTAVLRVNGTFQANFPLGPVTHGGNYRCFGSFRALPHAWSDPSDPLPVSVTGNSRHLHVLIGTSVVIIPFAILLFFLLHRWCANKKNAVVMDQEPAGNRTVNREDSDEQDPQEVTYAQLNHCVFTQRKITRPSQRPKTPPTDTSV.

The first 25 residues, Met1 to Gly25, serve as a signal peptide directing secretion. Over Gln26–Leu322 the chain is Extracellular. 3 consecutive Ig-like C2-type domains span residues Gly42–Ser97, Gly137–Gly197, and Gly237–Gly295. 2 disulfide bridges follow: Cys49/Cys95 and Cys144/Cys195. N-linked (GlcNAc...) asparagine glycans are attached at residues Asn179, Asn239, and Asn273. Residues Cys244 and Cys293 are joined by a disulfide bond. The chain crosses the membrane as a helical span at residues His323–Leu343. Over His344–Val410 the chain is Cytoplasmic.

It belongs to the immunoglobulin superfamily.

Its subcellular location is the cell membrane. Its function is as follows. Receptor on natural killer cells. May inhibit the activity of NK cells thus preventing cell lysis. This chain is Killer cell immunoglobulin-like receptor 3DL3 (KIR3DL3), found in Homo sapiens (Human).